The following is a 146-amino-acid chain: Putative calcium-binding protein CML19 (146 aa).

EF-hand domains follow at residues 3–38, 40–75, 79–114, and 115–146; these read AATA…ALGE, MSAE…LEMG, ERCR…LGSH, and QGIE…MMDA. The Ca(2+) site is built by Asp-16, Asp-18, Asp-20, Lys-22, Glu-27, Asp-53, Asp-55, Asp-57, and Glu-64. Asp-128, Asp-130, Asp-132, and Glu-139 together coordinate Ca(2+).

Potential calcium sensor. The chain is Putative calcium-binding protein CML19 (CML19) from Oryza sativa subsp. japonica (Rice).